Here is a 180-residue protein sequence, read N- to C-terminus: ATP synthase subunit delta (180 aa).

This sequence belongs to the ATPase delta chain family. As to quaternary structure, F-type ATPases have 2 components, F(1) - the catalytic core - and F(0) - the membrane proton channel. F(1) has five subunits: alpha(3), beta(3), gamma(1), delta(1), epsilon(1). F(0) has three main subunits: a(1), b(2) and c(10-14). The alpha and beta chains form an alternating ring which encloses part of the gamma chain. F(1) is attached to F(0) by a central stalk formed by the gamma and epsilon chains, while a peripheral stalk is formed by the delta and b chains.

It localises to the cell membrane. In terms of biological role, f(1)F(0) ATP synthase produces ATP from ADP in the presence of a proton or sodium gradient. F-type ATPases consist of two structural domains, F(1) containing the extramembraneous catalytic core and F(0) containing the membrane proton channel, linked together by a central stalk and a peripheral stalk. During catalysis, ATP synthesis in the catalytic domain of F(1) is coupled via a rotary mechanism of the central stalk subunits to proton translocation. Its function is as follows. This protein is part of the stalk that links CF(0) to CF(1). It either transmits conformational changes from CF(0) to CF(1) or is implicated in proton conduction. The polypeptide is ATP synthase subunit delta (Lactobacillus delbrueckii subsp. bulgaricus (strain ATCC 11842 / DSM 20081 / BCRC 10696 / JCM 1002 / NBRC 13953 / NCIMB 11778 / NCTC 12712 / WDCM 00102 / Lb 14)).